The primary structure comprises 125 residues: MPRYELALILKAMQRPETAATLKRTIEALMDRGAIVRDLENLGERALPYRISAHSQQHNRGGYFLVDFYAPTAAVESMVEHLSRDIDVIRGNIVKHPLTQELKECEGIVPVPLAEKLYSTKKRKK.

It belongs to the bacterial ribosomal protein bS6 family. As to quaternary structure, component of the mitochondrial small ribosomal subunit (mt-SSU). Mature mammalian 55S mitochondrial ribosomes consist of a small (28S) and a large (39S) subunit. The 28S small subunit contains a 12S ribosomal RNA (12S mt-rRNA) and 30 different proteins. The 39S large subunit contains a 16S rRNA (16S mt-rRNA), a copy of mitochondrial valine transfer RNA (mt-tRNA(Val)), which plays an integral structural role, and 52 different proteins.

It is found in the mitochondrion. The protein is Small ribosomal subunit protein bS6m (MRPS6) of Homo sapiens (Human).